The sequence spans 203 residues: Large ribosomal subunit protein uL6 (203 aa).

It belongs to the universal ribosomal protein uL6 family. As to quaternary structure, part of the 50S ribosomal subunit.

In terms of biological role, this protein binds to the 23S rRNA, and is important in its secondary structure. It is located near the subunit interface in the base of the L7/L12 stalk, and near the tRNA binding site of the peptidyltransferase center. This Hyphomonas neptunium (strain ATCC 15444) protein is Large ribosomal subunit protein uL6.